Consider the following 431-residue polypeptide: Histidine--tRNA ligase (431 aa).

The protein belongs to the class-II aminoacyl-tRNA synthetase family. Homodimer.

The protein resides in the cytoplasm. It carries out the reaction tRNA(His) + L-histidine + ATP = L-histidyl-tRNA(His) + AMP + diphosphate + H(+). In Leifsonia xyli subsp. xyli (strain CTCB07), this protein is Histidine--tRNA ligase (hisS).